A 654-amino-acid polypeptide reads, in one-letter code: Acetyl-coenzyme A synthetase (654 aa).

CoA is bound by residues 190–193 (RGGK) and Thr313. ATP contacts are provided by residues 389-391 (GEP), 413-418 (DTWWQT), Asp504, and Arg519. A CoA-binding site is contributed by Ser527. Residue Arg530 coordinates ATP. Residues Val541 and Val546 each coordinate Mg(2+). The residue at position 613 (Lys613) is an N6-acetyllysine.

Belongs to the ATP-dependent AMP-binding enzyme family. Requires Mg(2+) as cofactor. In terms of processing, acetylated. Deacetylation by the SIR2-homolog deacetylase activates the enzyme.

It carries out the reaction acetate + ATP + CoA = acetyl-CoA + AMP + diphosphate. Catalyzes the conversion of acetate into acetyl-CoA (AcCoA), an essential intermediate at the junction of anabolic and catabolic pathways. AcsA undergoes a two-step reaction. In the first half reaction, AcsA combines acetate with ATP to form acetyl-adenylate (AcAMP) intermediate. In the second half reaction, it can then transfer the acetyl group from AcAMP to the sulfhydryl group of CoA, forming the product AcCoA. This is Acetyl-coenzyme A synthetase from Leptospira borgpetersenii serovar Hardjo-bovis (strain L550).